The sequence spans 70 residues: Protease inhibitor HPI (70 aa).

Ala-2 carries the N-acetylalanine modification. Position 5 is an S-glutathionyl cysteine; alternate (Cys-5).

This sequence belongs to the protease inhibitor I13 (potato type I serine protease inhibitor) family. As to quaternary structure, monomer and homodimer; disulfide-linked. In terms of processing, occurs in 3 forms that differ in the modification of Cys-5, HPI-1 forms a homodimer through a disulfide bond, HPI-2a is modified by glutathionylation, and HPI-2b is covalently modified by addition of an unidentified adduct but not by a disulfide linkage.

Its function is as follows. Inhibitor of serine proteases, strongly inhibits subtilisin A and weakly inhibits trypsin. Does not inhibit chymotrypsin, papain, pepsin, pronase E, protease type XIII and thermolysin. HPI-1 inhibits subtilisin A with an Ki of 0.21 nM. HPI-2a inhibits subtilisin A with an Ki of 0.08 nM. HPI-2b inhibits subtilisin A with an Ki of 0.1 nM. The chain is Protease inhibitor HPI from Hevea brasiliensis (Para rubber tree).